Consider the following 259-residue polypeptide: Factor V activator (259 aa).

Residues 1-18 form the signal peptide; that stretch reads MVLIRVLANLLVLQLSYA. A propeptide spanning residues 19 to 24 is cleaved from the precursor; that stretch reads QKSSEL. The Peptidase S1 domain maps to 25 to 251; that stretch reads VVGGDECDIN…YTDWIQSIIA (227 aa). Intrachain disulfides connect Cys-31/Cys-165, Cys-52/Cys-68, Cys-100/Cys-258, Cys-144/Cys-212, Cys-176/Cys-191, and Cys-202/Cys-227. Residues His-67 and Asp-112 each act as charge relay system in the active site. Residue Ser-206 is the Charge relay system of the active site. The N-linked (GlcNAc...) asparagine glycan is linked to Asn-253.

It belongs to the peptidase S1 family. Snake venom subfamily. As to quaternary structure, monomer. In terms of processing, N-glycosylated. Contains 4.4% of hexoses, 4.4% of hexosamines and 3.1% of sialic acids. Expressed by the venom gland.

The protein resides in the secreted. The enzyme catalyses Fully activates human clotting factor V by a single cleavage at the 1545-Trp-Tyr-Leu-Arg-|-Ser-Asn-Asn-Gly-1552 bond. Cattle, but not rabbit, factor V is cleaved, and no other proteins of the clotting system are attacked. Esterase activity is observed on Bz-Arg-OEt and Tos-Arg-OMe, and amidase activity on Phe-pipecolyl-Arg-NHPhNO2.. Its activity is regulated as follows. Inhibited by D-Phe-Pro-Arg-chloromethyl ketone (FPRCK) (98%), PMSF (93%), benzamidine (67%), and diisopropylfluorophosphate (DFP). Is not inhibited by BPTI, antithrombin and EDTA. In terms of biological role, venom serine protease that converts factor V (F5) to the active form Va in the presence of calcium ions and phospholipids. It cleaves the Arg(1545)-Ser(1546) linkage in the human factor V molecule. Has hydrolytic activities against BAEE (1.2 U/mg), TAME, and Pro-Phe-Arg-MCA (4.9 U/mg). Shows coagulant activity. In Macrovipera lebetinus (Levantine viper), this protein is Factor V activator.